The primary structure comprises 994 residues: Cation-chloride cotransporter 2 (994 aa).

Positions 1–28 (MERGGFGGAGRHDEEAPAMRPAPQQRYR) are disordered. At 1–139 (MERGGFGGAG…GHPKETETKL (139 aa)) the chain is on the cytoplasmic side. Residues 140–160 (DTMMGVFVPCLQNILGIIYYI) traverse the membrane as a helical segment. Residues 161–174 (RFTWIVGMGGVWQS) lie on the Extracellular side of the membrane. The helical transmembrane segment at 175–195 (LVLVAFCGSCTFLTTISLSAI) threads the bilayer. At 196 to 221 (ATNGAMKGGGPYYLIGRALGPEVGVS) the chain is on the cytoplasmic side. A helical transmembrane segment spans residues 222–242 (IGLCFFLGNAVAGAMYVLGAV). Topologically, residues 243-287 (ETFLDAVPSAEFFQESVTVVTNTFVNGTAAGNATTISTPNLHDLQ) are extracellular. N-linked (GlcNAc...) asparagine glycans are attached at residues N268 and N274. The chain crosses the membrane as a helical span at residues 288–308 (VYGIIVTILLCFIVFGGVKII). The Cytoplasmic portion of the chain corresponds to 309–311 (NKV). The helical transmembrane segment at 312 to 332 (APAFLIPVLFSILCIYIGVFI) threads the bilayer. Topologically, residues 333-372 (APRPNASKWITGLSITTLKDNWSSDYQRTNNAGVPDPNGS) are extracellular. N-linked (GlcNAc...) asparagine glycans are attached at residues N337, N353, and N370. A helical membrane pass occupies residues 373 to 393 (IYWDFNALLGLYFPAVTGIMA). Over 394-412 (GSNRSASLKDTQRSIPIGT) the chain is Cytoplasmic. A helical transmembrane segment spans residues 413–433 (LHATISTTMMYLLSVFLFGAL). Residues 434–448 (STREGLLTDRLLCAA) are Extracellular-facing. The chain crosses the membrane as a helical span at residues 449 to 469 (VAWPSPAVVYAGIILSTLGAA). Residues 470 to 505 (LQSLTGAPRLLAAIANDDILPVLNYFKAYEGSEPHV) are Cytoplasmic-facing. The chain crosses the membrane as a helical span at residues 506-526 (ATLFTSFICISCVIIGNLDVI). At 527–529 (TPT) the chain is on the extracellular side. Residues 530–552 (ITMFFLLCYAGVNLSCFLLDLLD) form a helical membrane-spanning segment. Over 553-558 (APSWRP) the chain is Cytoplasmic. A helical membrane pass occupies residues 559–579 (RWKLHHWSLSLIGALLCIVIM). At 580–585 (FMISWT) the chain is on the extracellular side. A helical membrane pass occupies residues 586 to 606 (FTVVSLALASLIYYYVSLKGK). Residues 607–994 (AGDWGDGFKS…YRRDVVTLFT (388 aa)) are Cytoplasmic-facing.

Belongs to the SLC12A transporter family.

The protein localises to the membrane. In terms of biological role, probable cation/chloride cotransporter. This Oryza sativa subsp. japonica (Rice) protein is Cation-chloride cotransporter 2 (CCC2).